The following is a 264-amino-acid chain: MNGMAPPLFEPKERVLQLGETFEKQPRCAFHTVRYDFKPASIDTACEGDLEVGKGEQVTITLPNIEGSTPPVTVFKGSKKPYLKECILIINHDTGECRLEKLSSNITVKKIRAEGSSKVQSRIEQQQQQIRNSSKTPNNIKNSPPKDKMFPSSPMDDIERELKAEASIMDQLSSSDSSSDSKSSSSSSSSSENSSSDSEDEEARPSLPMSMPYLQPQPTLSAIPHQAVPDKDASHNRSQENSGHMMNTLRSDLQLSESGSDSDD.

Disordered stretches follow at residues 114–154 (EGSS…PSSP) and 169–264 (MDQL…DSDD). The span at 117 to 142 (SKVQSRIEQQQQQIRNSSKTPNNIKN) shows a compositional bias: polar residues. Low complexity predominate over residues 173-196 (SSSDSSSDSKSSSSSSSSSENSSS). Residues 228–238 (VPDKDASHNRS) show a composition bias toward basic and acidic residues. The segment covering 239 to 264 (QENSGHMMNTLRSDLQLSESGSDSDD) has biased composition (polar residues).

Belongs to the EAF family.

The protein resides in the nucleus speckle. In terms of biological role, may act as a transcriptional transactivator. This Gallus gallus (Chicken) protein is ELL-associated factor 2 (EAF2).